The chain runs to 631 residues: Pescadillo homolog (631 aa).

The BRCT domain maps to 321-414 (RLRTLFKGLK…QLLPTNDYFL (94 aa)). Positions 428-442 (SKRDSYIPPEEKALH) are enriched in basic and acidic residues. Disordered stretches follow at residues 428–471 (SKRD…EADQ) and 489–560 (YKKY…EVDE). 2 positions are modified to phosphoserine: S453 and S457. Acidic residues-rich tracts occupy residues 453–471 (SEEESEEDEAEKEEEEADQ) and 498–525 (VNEDEEDLSEEDDEEDDDEEDVDKEDVD). Residues 526 to 538 (EQTKRKQQEKEKM) show a composition bias toward basic and acidic residues. The span at 544–553 (KVHKVNKRQV) shows a compositional bias: basic residues. A coiled-coil region spans residues 593–629 (LRKKRRNIDADTKEAKKAAKREARKLAAEAAARAAKL).

The protein belongs to the pescadillo family.

It is found in the nucleus. The protein resides in the nucleolus. Its subcellular location is the nucleoplasm. Required for maturation of ribosomal RNAs and formation of the large ribosomal subunit. This is Pescadillo homolog from Drosophila persimilis (Fruit fly).